A 94-amino-acid polypeptide reads, in one-letter code: MTDAVGSIDMPDAQDEAPDSKKSRKGGKRGKKGPLKRLALFYRQIVADVRKVVWPSRNQLTTYTTVVIIFVVIMIGLVTLIDYGFSHAAKYVFG.

Positions 1–32 (MTDAVGSIDMPDAQDEAPDSKKSRKGGKRGKK) are disordered. The segment covering 22–32 (KSRKGGKRGKK) has biased composition (basic residues). Residues 65 to 85 (TVVIIFVVIMIGLVTLIDYGF) traverse the membrane as a helical segment.

The protein belongs to the SecE/SEC61-gamma family. As to quaternary structure, component of the Sec protein translocase complex. Heterotrimer consisting of SecY, SecE and SecG subunits. The heterotrimers can form oligomers, although 1 heterotrimer is thought to be able to translocate proteins. Interacts with the ribosome. Interacts with SecDF, and other proteins may be involved. Interacts with SecA.

Its subcellular location is the cell membrane. Functionally, essential subunit of the Sec protein translocation channel SecYEG. Clamps together the 2 halves of SecY. May contact the channel plug during translocation. In Streptomyces lividans, this protein is Protein translocase subunit SecE.